Here is a 165-residue protein sequence, read N- to C-terminus: Endoribonuclease YbeY (165 aa).

3 residues coordinate Zn(2+): H126, H130, and H136.

Belongs to the endoribonuclease YbeY family. Zn(2+) is required as a cofactor.

It localises to the cytoplasm. Single strand-specific metallo-endoribonuclease involved in late-stage 70S ribosome quality control and in maturation of the 3' terminus of the 16S rRNA. This chain is Endoribonuclease YbeY, found in Ruegeria pomeroyi (strain ATCC 700808 / DSM 15171 / DSS-3) (Silicibacter pomeroyi).